The chain runs to 155 residues: Large ribosomal subunit protein uL30 (155 aa).

The protein belongs to the universal ribosomal protein uL30 family. As to quaternary structure, part of the 50S ribosomal subunit.

The protein is Large ribosomal subunit protein uL30 of Nanoarchaeum equitans (strain Kin4-M).